A 162-amino-acid polypeptide reads, in one-letter code: Ribosome maturation factor RimP (162 aa).

This sequence belongs to the RimP family.

It localises to the cytoplasm. Required for maturation of 30S ribosomal subunits. The chain is Ribosome maturation factor RimP from Beutenbergia cavernae (strain ATCC BAA-8 / DSM 12333 / CCUG 43141 / JCM 11478 / NBRC 16432 / NCIMB 13614 / HKI 0122).